The following is a 483-amino-acid chain: MVRARTLMLQGTCSGAGKTALVAGLCRLLARHGVRVAPFKPQNMSNNAAVTADGGEIGRGQWLQALAAGLPAHTDMNPVLLKPEAERTAQVVVQGHVTGRLEARAFREARQPLLPPVLESFQRLCAAYDVVLVEGAGSPAEPNLRQGDIANMGFAEAADVPVWLVGDIDRGGVFASLLGTLEWLDDADRRRVEALIINRFRGSPELLGEAPAQLEARGGVPVIGVVPAVPDLHLPEEDAPYRMAGPRGSGGALQVVAVAYPRMSNHDDLDALDAESGVHVRFARQPRELDGADLIVLPGSKHVFSDLAWLRESGMAEALYRHCRYGGRVVGLCGGLQMLGEGIEDPEGVEGGGSAPGLGLLPVHTRLAPTKQLAEVHGHAEWPAPVAVTGYEIHHGVTGAQEGLFPFVARSDDGRVLGSYLHRLFDSGPFRRALLVEWFALEGEGGDEQARIEAELDRLADTLEQALEPGWLKALGVPARPST.

A GATase cobBQ-type domain is found at 252–430; sequence ALQVVAVAYP…LHRLFDSGPF (179 aa). C333 serves as the catalytic Nucleophile. Residue H422 is part of the active site.

It belongs to the CobB/CobQ family. CobQ subfamily.

Its pathway is cofactor biosynthesis; adenosylcobalamin biosynthesis. Catalyzes amidations at positions B, D, E, and G on adenosylcobyrinic A,C-diamide. NH(2) groups are provided by glutamine, and one molecule of ATP is hydrogenolyzed for each amidation. This Halorhodospira halophila (strain DSM 244 / SL1) (Ectothiorhodospira halophila (strain DSM 244 / SL1)) protein is Cobyric acid synthase.